A 231-amino-acid polypeptide reads, in one-letter code: tRNA (guanine-N(7)-)-methyltransferase (231 aa).

S-adenosyl-L-methionine is bound by residues D57, E82, D109, and D132. Residue D132 is part of the active site. Residues K136, D168, and 205–208 (TKFE) contribute to the substrate site. The disordered stretch occupies residues 194 to 214 (AFVPPPPPRPQTKFERRGLRK).

Belongs to the class I-like SAM-binding methyltransferase superfamily. TrmB family.

It carries out the reaction guanosine(46) in tRNA + S-adenosyl-L-methionine = N(7)-methylguanosine(46) in tRNA + S-adenosyl-L-homocysteine. The protein operates within tRNA modification; N(7)-methylguanine-tRNA biosynthesis. Catalyzes the formation of N(7)-methylguanine at position 46 (m7G46) in tRNA. In Halorhodospira halophila (strain DSM 244 / SL1) (Ectothiorhodospira halophila (strain DSM 244 / SL1)), this protein is tRNA (guanine-N(7)-)-methyltransferase.